The following is a 205-amino-acid chain: Large ribosomal subunit protein bL25 (205 aa).

Belongs to the bacterial ribosomal protein bL25 family. CTC subfamily. As to quaternary structure, part of the 50S ribosomal subunit; part of the 5S rRNA/L5/L18/L25 subcomplex. Contacts the 5S rRNA. Binds to the 5S rRNA independently of L5 and L18.

Its function is as follows. This is one of the proteins that binds to the 5S RNA in the ribosome where it forms part of the central protuberance. In Bartonella bacilliformis (strain ATCC 35685 / KC583 / Herrer 020/F12,63), this protein is Large ribosomal subunit protein bL25.